The sequence spans 232 residues: Glutathione S-transferase E14 (232 aa).

The 82-residue stretch at 4-85 (PKPILYYDER…HLAEKFDEGG (82 aa)) folds into the GST N-terminal domain. One can recognise a GST C-terminal domain in the interval 91–218 (EHAERMKVLN…RQTMESVGSF (128 aa)).

It belongs to the GST superfamily. Epsilon family. As to expression, expressed in the adult ovary (at protein level).

The enzyme catalyses RX + glutathione = an S-substituted glutathione + a halide anion + H(+). In terms of biological role, conjugation of reduced glutathione to a wide number of exogenous and endogenous hydrophobic electrophiles. Essential for ecdysteroid biosynthesis. May be involved in detoxification. The sequence is that of Glutathione S-transferase E14 from Drosophila melanogaster (Fruit fly).